The following is a 340-amino-acid chain: MRLCITGGGTGGHLMIAEALVEACANDGHEAIFIGSTSGQDRKYFEQNSKFSHVYFLQTTGVVNQRGLGKLKALWLVLRAFFASRAILKKHNIQATYSVGGFSAAAASFASLSRLIPLFIHEQNAVYGKLNSILKPFATRFISAYDEASPIKGYPVKDIFFKNARLRDEIKCVIFLGGSQGAKAINDLALSVALELEARGVKIIHQAGERDYERVKSAYEELGVKAELCGFTKEMPSLMARADLAVSRSGASTLWELCANALPSFFIPFPHAASDHQYHNAKFIVDNELGWCQREEEDLRATLLSILPQNLADKSKALMEYSSRDVAKKMITDVVMSLNA.

Residues T10–G12, N124, S179, and Q277 contribute to the UDP-N-acetyl-alpha-D-glucosamine site.

The protein belongs to the glycosyltransferase 28 family. MurG subfamily.

It is found in the cell inner membrane. The catalysed reaction is di-trans,octa-cis-undecaprenyl diphospho-N-acetyl-alpha-D-muramoyl-L-alanyl-D-glutamyl-meso-2,6-diaminopimeloyl-D-alanyl-D-alanine + UDP-N-acetyl-alpha-D-glucosamine = di-trans,octa-cis-undecaprenyl diphospho-[N-acetyl-alpha-D-glucosaminyl-(1-&gt;4)]-N-acetyl-alpha-D-muramoyl-L-alanyl-D-glutamyl-meso-2,6-diaminopimeloyl-D-alanyl-D-alanine + UDP + H(+). The protein operates within cell wall biogenesis; peptidoglycan biosynthesis. Functionally, cell wall formation. Catalyzes the transfer of a GlcNAc subunit on undecaprenyl-pyrophosphoryl-MurNAc-pentapeptide (lipid intermediate I) to form undecaprenyl-pyrophosphoryl-MurNAc-(pentapeptide)GlcNAc (lipid intermediate II). This chain is UDP-N-acetylglucosamine--N-acetylmuramyl-(pentapeptide) pyrophosphoryl-undecaprenol N-acetylglucosamine transferase, found in Sulfurimonas denitrificans (strain ATCC 33889 / DSM 1251) (Thiomicrospira denitrificans (strain ATCC 33889 / DSM 1251)).